The primary structure comprises 243 residues: UPF0702 transmembrane protein YkjA (243 aa).

3 helical membrane-spanning segments follow: residues 3–23 (WMVW…YILF), 34–54 (MNNF…EPIL), and 58–78 (LPMS…MSKL).

Belongs to the UPF0702 family.

The protein localises to the cell membrane. In Bacillus subtilis (strain 168), this protein is UPF0702 transmembrane protein YkjA (ykjA).